Reading from the N-terminus, the 418-residue chain is Mitochondrial outer membrane protein SLC25A46 (418 aa).

The disordered stretch occupies residues 1–30 (MHPRRPDGFDGLGYRGGARDEQGFGGAFPA). Ser-32 bears the Phosphoserine mark. The interval 44 to 93 (TTPPDIPGSRNLHWGEKSPPYGVPTTSTPYEGPTEEPFSSGGGGSVQGQS) is disordered. A Phosphothreonine modification is found at Thr-45. One copy of the Solcar 1 repeat lies at 96-187 (QLNRFAGFGI…GIISEFTPLP (92 aa)). 6 helical membrane-spanning segments follow: residues 103–123 (FGIG…CIVL), 167–187 (FIVQ…TPLP), 202–222 (HLLL…ASLI), 258–278 (LLPL…HYII), 314–334 (FPEL…LYPL), and 382–402 (VFGF…HAAV). The Solcar 2 repeat unit spans residues 311-413 (DAYFPELIAN…QITKIIYSTL (103 aa)).

Belongs to the mitochondrial carrier (TC 2.A.29) family. In terms of assembly, associates with the mitochondrial contact site and cristae organizing system (MICOS) complex. May associate with the endoplasmic reticulum membrane protein complex (EMC).

The protein resides in the mitochondrion outer membrane. Its function is as follows. Transmembrane protein of the mitochondrial outer membrane that controls mitochondrial organization. May regulate the assembly of the MICOS (mitochondrial contact site and cristae organizing system) complex which is essential to the biogenesis and dynamics of mitochondrial cristae, the inwards folds of the inner mitochondrial membrane. Through its interaction with the EMC (endoplasmic reticulum membrane protein complex), could regulate mitochondrial lipid homeostasis and thereby mitochondrial fission. This chain is Mitochondrial outer membrane protein SLC25A46, found in Homo sapiens (Human).